The sequence spans 149 residues: Transcription antitermination protein NusB (149 aa).

Belongs to the NusB family.

Functionally, involved in transcription antitermination. Required for transcription of ribosomal RNA (rRNA) genes. Binds specifically to the boxA antiterminator sequence of the ribosomal RNA (rrn) operons. The chain is Transcription antitermination protein NusB from Acinetobacter baumannii (strain AB307-0294).